Here is a 334-residue protein sequence, read N- to C-terminus: GTPase Obg (334 aa).

In terms of domain architecture, Obg spans 4-162 (FDFIDEVKKY…GWIKLELKLL (159 aa)). Positions 163-330 (AEVGLVGFPN…FKDKIWKLLH (168 aa)) constitute an OBG-type G domain. GTP contacts are provided by residues 169-176 (GFPNAGKS), 194-198 (FTTLV), 216-219 (DMPG), 284-287 (SKLD), and 311-313 (SSV). Positions 176 and 196 each coordinate Mg(2+).

This sequence belongs to the TRAFAC class OBG-HflX-like GTPase superfamily. OBG GTPase family. Monomer. Mg(2+) serves as cofactor.

The protein localises to the cytoplasm. Functionally, an essential GTPase which binds GTP, GDP and possibly (p)ppGpp with moderate affinity, with high nucleotide exchange rates and a fairly low GTP hydrolysis rate. Plays a role in control of the cell cycle, stress response, ribosome biogenesis and in those bacteria that undergo differentiation, in morphogenesis control. This Amoebophilus asiaticus (strain 5a2) protein is GTPase Obg.